Consider the following 570-residue polypeptide: Putative periplasmic trehalase (570 aa).

Positions 1-34 are cleaved as a signal peptide; it reads MIPPEIRRSVLLQKAIKLALAGTLLTFASFSATA. Residues Arg-159, 166–167, Asn-203, 212–214, 284–286, and Gly-317 contribute to the substrate site; these read WD, RSQ, and RPE. Catalysis depends on proton donor/acceptor residues Asp-319 and Glu-503. Glu-518 contacts substrate. Positions 544–570 are disordered; it reads KPCDSVPSTRPASLSATPTKTPSAATQ. Low complexity predominate over residues 554 to 570; sequence PASLSATPTKTPSAATQ.

This sequence belongs to the glycosyl hydrolase 37 family. As to quaternary structure, monomer.

It is found in the periplasm. It carries out the reaction alpha,alpha-trehalose + H2O = alpha-D-glucose + beta-D-glucose. In terms of biological role, provides the cells with the ability to utilize trehalose at high osmolarity by splitting it into glucose molecules that can subsequently be taken up by the phosphotransferase-mediated uptake system. This Salmonella typhi protein is Putative periplasmic trehalase.